The primary structure comprises 79 residues: Small ribosomal subunit protein bS18 (79 aa).

It belongs to the bacterial ribosomal protein bS18 family. In terms of assembly, part of the 30S ribosomal subunit. Forms a tight heterodimer with protein bS6.

Its function is as follows. Binds as a heterodimer with protein bS6 to the central domain of the 16S rRNA, where it helps stabilize the platform of the 30S subunit. The polypeptide is Small ribosomal subunit protein bS18 (Nitrobacter winogradskyi (strain ATCC 25391 / DSM 10237 / CIP 104748 / NCIMB 11846 / Nb-255)).